The chain runs to 496 residues: Glycylpeptide N-tetradecanoyltransferase 1 (496 aa).

Residues 1–81 (MADESETAVK…DSTQDQPVKM (81 aa)) form a disordered region. Phosphoserine is present on residues Ser-31 and Ser-47. Over residues 55–66 (KKKKKKQKKKKE) the composition is skewed to basic residues. Ser-83 is modified (phosphoserine). Tetradecanoyl-CoA-binding residues include Gln-118, Phe-119, Trp-120, Phe-247, Leu-248, Cys-249, Val-250, Ser-256, Arg-258, Val-259, and Ala-260.

The protein belongs to the NMT family.

The protein localises to the cytoplasm. Its subcellular location is the cytosol. The protein resides in the membrane. It catalyses the reaction N-terminal glycyl-[protein] + tetradecanoyl-CoA = N-tetradecanoylglycyl-[protein] + CoA + H(+). The enzyme catalyses N-terminal glycyl-L-lysyl-[protein] + tetradecanoyl-CoA = N-terminal glycyl-(N(6)-tetradecanoyl)-L-lysyl-[protein] + CoA + H(+). Adds a myristoyl group to the N-terminal glycine residue of certain cellular and viral proteins. Also able to mediate N-terminal lysine myristoylation of proteins: catalyzes myristoylation of ARF6 on both 'Gly-2' and 'Lys-3'. Lysine myristoylation is required to maintain ARF6 on membranes during the GTPase cycle. The polypeptide is Glycylpeptide N-tetradecanoyltransferase 1 (Nmt1) (Rattus norvegicus (Rat)).